The following is a 347-amino-acid chain: Selenide, water dikinase 2 (347 aa).

Residue U18 is part of the active site. Position 18 (U18) is a non-standard amino acid, selenocysteine. ATP contacts are provided by residues K21 and 48–50 (TSD). D51 serves as a coordination point for Mg(2+). Residues D68, D91, and 138–140 (GHT) contribute to the ATP site. Residue D91 participates in Mg(2+) binding. Mg(2+) is bound at residue D226.

This sequence belongs to the selenophosphate synthase 1 family. Class I subfamily. Homodimer. The cofactor is Mg(2+).

It catalyses the reaction hydrogenselenide + ATP + H2O = selenophosphate + AMP + phosphate + 2 H(+). Synthesizes selenophosphate from selenide and ATP. This Peptoclostridium acidaminophilum (Eubacterium acidaminophilum) protein is Selenide, water dikinase 2.